Consider the following 398-residue polypeptide: Putative F-box protein At4g17780 (398 aa).

The F-box domain occupies 8–55 (PSSIYIVADLLEDIFLRLPLKSILISKSVSKRWRSILESKTFVERRMS).

The chain is Putative F-box protein At4g17780 from Arabidopsis thaliana (Mouse-ear cress).